The chain runs to 434 residues: Histidinol dehydrogenase (434 aa).

The NAD(+) site is built by Y130, Q188, and N211. Residues S237, Q259, and H262 each contribute to the substrate site. Zn(2+)-binding residues include Q259 and H262. Catalysis depends on proton acceptor residues E326 and H327. Substrate is bound by residues H327, D360, E414, and H419. D360 is a Zn(2+) binding site. Zn(2+) is bound at residue H419.

This sequence belongs to the histidinol dehydrogenase family. As to quaternary structure, homodimer. It depends on Zn(2+) as a cofactor.

The enzyme catalyses L-histidinol + 2 NAD(+) + H2O = L-histidine + 2 NADH + 3 H(+). It functions in the pathway amino-acid biosynthesis; L-histidine biosynthesis; L-histidine from 5-phospho-alpha-D-ribose 1-diphosphate: step 9/9. Its function is as follows. Catalyzes the sequential NAD-dependent oxidations of L-histidinol to L-histidinaldehyde and then to L-histidine. This chain is Histidinol dehydrogenase, found in Escherichia coli (strain K12).